The sequence spans 269 residues: MIKVEYKHTEIAVKKKLGQNFLTDRNITRKIVTESETNPDDTILEIGPGFGALTREISTITPRFTVVEKDPKLASFIRNEYPELTVIEGDFLTVDLKKIAGEKPLRVLGNIPYAITSPILFKLLENRHILLSATLMMQHEVALRITAKPRTKDYGILAVQMQAFCETKYLFRVGRKVFRPQPGVDSAVISMKPKVNDPVSDREGFSRFVRCAFHQRRKTLQNNLKKTYELDRVESSVLKQRAEELSIDEFFRLFEQIRPLMVSSADPES.

Positions 20, 22, 47, 68, 90, and 110 each coordinate S-adenosyl-L-methionine.

The protein belongs to the class I-like SAM-binding methyltransferase superfamily. rRNA adenine N(6)-methyltransferase family. RsmA subfamily.

The protein localises to the cytoplasm. It carries out the reaction adenosine(1518)/adenosine(1519) in 16S rRNA + 4 S-adenosyl-L-methionine = N(6)-dimethyladenosine(1518)/N(6)-dimethyladenosine(1519) in 16S rRNA + 4 S-adenosyl-L-homocysteine + 4 H(+). In terms of biological role, specifically dimethylates two adjacent adenosines (A1518 and A1519) in the loop of a conserved hairpin near the 3'-end of 16S rRNA in the 30S particle. May play a critical role in biogenesis of 30S subunits. This is Ribosomal RNA small subunit methyltransferase A from Chlorobium phaeobacteroides (strain DSM 266 / SMG 266 / 2430).